A 239-amino-acid chain; its full sequence is MAEINRMQYEREYTEGISQSMRVPEKLKVAPSNSGVDPKTQPDMPIPGVFMEVPERIVIAGHSEESLFSRPSNLDFIPGANIAALALKTPPRVLTLSERPLDFLDLEGPAPATPHSKEVRSSGHLKRDGLASENSLRQNGQLVRHDSMPILRCGSSTSVPVTHHDNPRSAMSTLDTTLDSTPDDLALADAASLRRQIIKLNRRLLLLEEENKERVKHEMTMYSIIIIFGLLNSWLWFRR.

Over 1–219 (MAEINRMQYE…ENKERVKHEM (219 aa)) the chain is Cytoplasmic. The interval 107-139 (EGPAPATPHSKEVRSSGHLKRDGLASENSLRQN) is disordered. Basic and acidic residues predominate over residues 115–130 (HSKEVRSSGHLKRDGL). The stretch at 184–214 (DLALADAASLRRQIIKLNRRLLLLEEENKER) forms a coiled coil. Residues 220 to 237 (TMYSIIIIFGLLNSWLWF) traverse the membrane as a helical; Anchor for type IV membrane protein segment. At 238–239 (RR) the chain is on the extracellular side.

The protein belongs to the Tango11 family.

The protein resides in the mitochondrion outer membrane. Its subcellular location is the peroxisome. Functionally, plays a role in mitochondrial and peroxisomal fission. Promotes the recruitment and association of the fission mediator dynamin-related protein 1 (DNM1L) to the mitochondrial surface. The polypeptide is Mitochondrial fission factor homolog B (mff-b) (Xenopus laevis (African clawed frog)).